A 1769-amino-acid polypeptide reads, in one-letter code: Gamma-tubulin complex component 6 (1769 aa).

Disordered regions lie at residues 809–842, 859–881, and 1284–1360; these read EAQQ…HSCD, STPS…PFST, and TVCS…AEAR. Polar residues predominate over residues 820 to 831; sequence FPSTGSQVTSTG. Positions 1314–1326 are enriched in basic and acidic residues; sequence PEEKGPGKSRDAE. Polar residues predominate over residues 1332-1343; that stretch reads LPSSSQEDTAVP.

The protein belongs to the TUBGCP family. In terms of assembly, component of the gamma-tubulin ring complex (gTuRC) consisting of TUBGCP2, TUBGCP3, TUBGCP4, TUBGCP5 and TUBGCP6 and gamma-tubulin TUBG1 or TUBG2. TUBGCP2, TUBGCP3, TUBGCP4, TUBGCP5 and TUBGCP6 assemble in a 5:5:2:1:1 stoichiometry; each is associated with a gamma-tubulin, thereby arranging 14 gamma-tubulins in a helical manner. Gamma-tubulin at the first position is blocked by TUBGCP3 at the last position, allowing 13 protafilaments to grow into a microtubule. The gTuRC (via TUBGCP3 and TUBGCP6) interacts with ACTB and MZT1; the interactions form a luminal bridge that stabilizes the initial structure during complex assembly. The gTuRC (via TUBGCP2) interacts with MZT2A/MZT2B and CDK5RAP2 (via CM1 motif); the interactions play a role in gTuRC activation.

The protein localises to the cytoplasm. It is found in the cytoskeleton. Its subcellular location is the microtubule organizing center. It localises to the centrosome. Component of the gamma-tubulin ring complex (gTuRC) which mediates microtubule nucleation. The gTuRC regulates the minus-end nucleation of alpha-beta tubulin heterodimers that grow into microtubule protafilaments, a critical step in centrosome duplication and spindle formation. The chain is Gamma-tubulin complex component 6 (Tubgcp6) from Mus musculus (Mouse).